A 94-amino-acid chain; its full sequence is Large ribosomal subunit protein uL23 (94 aa).

It belongs to the universal ribosomal protein uL23 family. In terms of assembly, part of the 50S ribosomal subunit. Contacts protein L29, and trigger factor when it is bound to the ribosome.

Functionally, one of the early assembly proteins it binds 23S rRNA. One of the proteins that surrounds the polypeptide exit tunnel on the outside of the ribosome. Forms the main docking site for trigger factor binding to the ribosome. This Pelobacter propionicus (strain DSM 2379 / NBRC 103807 / OttBd1) protein is Large ribosomal subunit protein uL23.